A 443-amino-acid polypeptide reads, in one-letter code: Glutamate-1-semialdehyde 2,1-aminomutase (443 aa).

Residue Lys277 is modified to N6-(pyridoxal phosphate)lysine.

Belongs to the class-III pyridoxal-phosphate-dependent aminotransferase family. HemL subfamily. As to quaternary structure, homodimer. Pyridoxal 5'-phosphate is required as a cofactor.

The protein resides in the cytoplasm. It catalyses the reaction (S)-4-amino-5-oxopentanoate = 5-aminolevulinate. It participates in porphyrin-containing compound metabolism; protoporphyrin-IX biosynthesis; 5-aminolevulinate from L-glutamyl-tRNA(Glu): step 2/2. In Pseudarthrobacter chlorophenolicus (strain ATCC 700700 / DSM 12829 / CIP 107037 / JCM 12360 / KCTC 9906 / NCIMB 13794 / A6) (Arthrobacter chlorophenolicus), this protein is Glutamate-1-semialdehyde 2,1-aminomutase.